We begin with the raw amino-acid sequence, 354 residues long: Decorin (354 aa).

The signal sequence occupies residues 1–16 (MKATLVLFLLAQVSWA). The propeptide occupies 17-30 (GPFEQRGLFDFMLE). O-linked (Xyl...) (glycosaminoglycan) serine glycosylation is present at Ser34. Intrachain disulfides connect Cys49-Cys55 and Cys53-Cys62. 12 LRR repeats span residues 68-88 (DKVP…NNKI), 89-112 (TEIK…NNKI), 113-136 (SKIS…KNHL), 137-157 (KELP…DNEI), 158-181 (TKLK…GNPL), 182-207 (KNSG…DTNI), 208-228 (TAIP…GNKI), 229-252 (AKVD…FNSI), 253-276 (TVVE…NNKL), 277-299 (LRVP…NNNI), 300-329 (SEVG…SNPV), and 330-354 (RYWQ…GNYK). Asn206 carries an N-linked (GlcNAc...) asparagine glycan. N-linked (GlcNAc...) asparagine glycosylation is found at Asn241, Asn257, and Asn298. The cysteines at positions 308 and 341 are disulfide-linked.

This sequence belongs to the small leucine-rich proteoglycan (SLRP) family. SLRP class I subfamily. In terms of assembly, binds to type I and type II collagen, fibronectin and TGF-beta. Forms a ternary complex with MFAP2 and ELN. Interacts with DPT. The attached glycosaminoglycan chain can be either chondroitin sulfate or dermatan sulfate depending upon the tissue of origin.

It is found in the secreted. The protein resides in the extracellular space. The protein localises to the extracellular matrix. Functionally, may affect the rate of fibrils formation. May be implicated in the dilatation of the rat cervix. This Rattus norvegicus (Rat) protein is Decorin (Dcn).